The sequence spans 104 residues: uncharacterized protein (104 aa).

This is an uncharacterized protein from Escherichia coli (strain K12).